Reading from the N-terminus, the 351-residue chain is Photosystem II D2 protein (351 aa).

Residues 39-59 (CSYLALGGWLTGTTFVTSWYT) traverse the membrane as a helical segment. His-116 is a binding site for chlorophyll a. The helical transmembrane segment at 123–139 (GFCLRQFEIARLVGIRP) threads the bilayer. Pheophytin a is bound by residues Gln-128 and Asn-141. A helical membrane pass occupies residues 151-164 (VFVSVFLMYPLGQA). Residue His-196 coordinates chlorophyll a. A helical transmembrane segment spans residues 206–226 (GALLCAIHGATVQNTLFEDGD). A plastoquinone is bound by residues His-213 and Phe-260. Residue His-213 participates in Fe cation binding. His-267 lines the Fe cation pocket. The helical transmembrane segment at 277–293 (GLWTSAFGIVGLALNLR) threads the bilayer.

It belongs to the reaction center PufL/M/PsbA/D family. As to quaternary structure, PSII is composed of 1 copy each of membrane proteins PsbA, PsbB, PsbC, PsbD, PsbE, PsbF, PsbH, PsbI, PsbJ, PsbK, PsbL, PsbM, PsbT, PsbX, PsbY, PsbZ, Psb30/Ycf12, at least 3 peripheral proteins of the oxygen-evolving complex and a large number of cofactors. It forms dimeric complexes. The D1/D2 heterodimer binds P680, chlorophylls that are the primary electron donor of PSII, and subsequent electron acceptors. It shares a non-heme iron and each subunit binds pheophytin, quinone, additional chlorophylls, carotenoids and lipids. There is also a Cl(-1) ion associated with D1 and D2, which is required for oxygen evolution. The PSII complex binds additional chlorophylls, carotenoids and specific lipids. is required as a cofactor.

Its subcellular location is the plastid. The protein localises to the chloroplast thylakoid membrane. The catalysed reaction is 2 a plastoquinone + 4 hnu + 2 H2O = 2 a plastoquinol + O2. Photosystem II (PSII) is a light-driven water:plastoquinone oxidoreductase that uses light energy to abstract electrons from H(2)O, generating O(2) and a proton gradient subsequently used for ATP formation. It consists of a core antenna complex that captures photons, and an electron transfer chain that converts photonic excitation into a charge separation. The D1/D2 (PsbA/PsbD) reaction center heterodimer binds P680, the primary electron donor of PSII as well as several subsequent electron acceptors. D2 is needed for assembly of a stable PSII complex. The protein is Photosystem II D2 protein of Gracilaria tenuistipitata var. liui (Red alga).